Reading from the N-terminus, the 138-residue chain is RuBisCO chaperone RbcX (138 aa).

The disordered stretch occupies residues 118-138 (VDNFPSETSNGESNNNDSPPS). The segment covering 122–138 (PSETSNGESNNNDSPPS) has biased composition (polar residues).

This sequence belongs to the RbcX family. As to quaternary structure, homodimer. Interacts with the exposed C-terminal peptide of RbcL via its central cleft, contacts a second RbcL monomer via its peripheral polar surface.

The protein localises to the carboxysome. It localises to the cytoplasm. An RbcL-specific chaperone. The central cleft of the RbcX homodimer (RbcX2) binds the C-terminus of an RbcL monomer, stabilizing the C-terminus and probably preventing its reassociation with chaperonin GroEL-ES. At the same time the peripheral region of RbcX2 binds a second RbcL monomer, bridging the RbcL homodimers in the correct orientation. The RbcX2(2)-bound RbcL dimers then assemble into the RbcL8 core (RbcL8-(RbcX2)8). RbcS binding triggers the release of RbcX2. This Synechocystis sp. (strain ATCC 27184 / PCC 6803 / Kazusa) protein is RuBisCO chaperone RbcX.